The following is a 137-amino-acid chain: Peptide methionine sulfoxide reductase MsrB (137 aa).

Residues 7-129 (AEELKKNLSE…NSASLRFTDG (123 aa)) enclose the MsrB domain. Residues Cys-46, Cys-49, Cys-95, and Cys-98 each contribute to the Zn(2+) site. The active-site Nucleophile is Cys-118.

It belongs to the MsrB Met sulfoxide reductase family. It depends on Zn(2+) as a cofactor.

The enzyme catalyses L-methionyl-[protein] + [thioredoxin]-disulfide + H2O = L-methionyl-(R)-S-oxide-[protein] + [thioredoxin]-dithiol. The chain is Peptide methionine sulfoxide reductase MsrB from Escherichia coli O45:K1 (strain S88 / ExPEC).